A 583-amino-acid polypeptide reads, in one-letter code: 1-deoxy-D-xylulose-5-phosphate synthase (583 aa).

Thiamine diphosphate is bound by residues His-74 and 115-117 (GHS). Residue Asp-146 participates in Mg(2+) binding. Thiamine diphosphate is bound by residues 147–148 (GG), Asn-175, Phe-244, and Glu-327. Asn-175 serves as a coordination point for Mg(2+).

The protein belongs to the transketolase family. DXPS subfamily. Homodimer. Mg(2+) is required as a cofactor. Thiamine diphosphate serves as cofactor.

It carries out the reaction D-glyceraldehyde 3-phosphate + pyruvate + H(+) = 1-deoxy-D-xylulose 5-phosphate + CO2. It participates in metabolic intermediate biosynthesis; 1-deoxy-D-xylulose 5-phosphate biosynthesis; 1-deoxy-D-xylulose 5-phosphate from D-glyceraldehyde 3-phosphate and pyruvate: step 1/1. Catalyzes the acyloin condensation reaction between C atoms 2 and 3 of pyruvate and glyceraldehyde 3-phosphate to yield 1-deoxy-D-xylulose-5-phosphate (DXP). This is 1-deoxy-D-xylulose-5-phosphate synthase from Myxococcus xanthus (strain DK1622).